The chain runs to 210 residues: MGQKVNPIGFRLGVIKTWDSKWYAEKDYAKLLHEDLKLRSFLKKRLYHSGVSKIEIERAAGKAKINIFTARPGLIIGKKGSEVETLKKELAKLTDKEVYLNIQEVRKPELDAQLVAENIALQLERRVAFRRAMKKSVTSSLKFGAKGIRITCSGRLGGAEMSRTEWYREGRVPLHTLRADIDYGFAEAKTTYGIIGVKVLLFKGEVLSGK.

In terms of domain architecture, KH type-2 spans 38–106; the sequence is LRSFLKKRLY…EVYLNIQEVR (69 aa).

Belongs to the universal ribosomal protein uS3 family. In terms of assembly, part of the 30S ribosomal subunit. Forms a tight complex with proteins S10 and S14.

Its function is as follows. Binds the lower part of the 30S subunit head. Binds mRNA in the 70S ribosome, positioning it for translation. The chain is Small ribosomal subunit protein uS3 from Geotalea uraniireducens (strain Rf4) (Geobacter uraniireducens).